The primary structure comprises 498 residues: ATP synthase subunit beta, chloroplastic (498 aa).

T6 is subject to Phosphothreonine. A Phosphoserine modification is found at S13. 172 to 179 (GGAGVGKT) lines the ATP pocket.

This sequence belongs to the ATPase alpha/beta chains family. As to quaternary structure, F-type ATPases have 2 components, CF(1) - the catalytic core - and CF(0) - the membrane proton channel. CF(1) has five subunits: alpha(3), beta(3), gamma(1), delta(1), epsilon(1). CF(0) has four main subunits: a(1), b(1), b'(1) and c(9-12).

It is found in the plastid. The protein resides in the chloroplast thylakoid membrane. It carries out the reaction ATP + H2O + 4 H(+)(in) = ADP + phosphate + 5 H(+)(out). Produces ATP from ADP in the presence of a proton gradient across the membrane. The catalytic sites are hosted primarily by the beta subunits. The sequence is that of ATP synthase subunit beta, chloroplastic from Olimarabidopsis pumila (Dwarf rocket).